The sequence spans 129 residues: Dynein 14 kDa light chain, flagellar outer arm (129 aa).

Residues 2–109 form the Thioredoxin domain; the sequence is AFITEIANEA…LNRIVTELSG (108 aa). An intrachain disulfide couples C34 to C37. Residues 107-129 are disordered; the sequence is LSGKNPPPAAPAAAPAAPAAEAS. Residues 117–129 are compositionally biased toward low complexity; the sequence is PAAAPAAPAAEAS.

In terms of assembly, consists of at least 3 heavy chains (alpha, beta and gamma), 2 intermediate chains and 8 light chains.

It is found in the cell projection. The protein resides in the cilium. Its subcellular location is the flagellum. It localises to the cytoplasm. The protein localises to the cytoskeleton. It is found in the flagellum axoneme. May be involved in regulating the redox state of functionally important thiol groups within dynein. This Chlamydomonas reinhardtii (Chlamydomonas smithii) protein is Dynein 14 kDa light chain, flagellar outer arm.